A 396-amino-acid polypeptide reads, in one-letter code: tRNA (guanine(9)-N1)-methyltransferase (396 aa).

Basic and acidic residues-rich tracts occupy residues 1–18 (MEDDDRPRKYPKLNHDEV) and 52–73 (DRIDNDVKQACDEEGQDAHGKD). The tract at residues 1–109 (MEDDDRPRKY…KVKRKEKLVA (109 aa)) is disordered. One can recognise an SAM-dependent MTase TRM10-type domain in the interval 139–357 (TQKKFQRSTL…QVIPQRKGGK (219 aa)). S-adenosyl-L-methionine is bound by residues 264 to 265 (LS), Gly-284, 288 to 292 (DKNRH), Cys-296, Leu-310, and 322 to 324 (QVL). Asp-288 functions as the Proton acceptor in the catalytic mechanism. Residues 354 to 396 (KGGKLKSADHESEDQTPRESVEAVEAEPDGEGAAAEAGEGGKE) are disordered. Over residues 359–374 (KSADHESEDQTPRESV) the composition is skewed to basic and acidic residues.

This sequence belongs to the class IV-like SAM-binding methyltransferase superfamily. TRM10 family. In terms of assembly, monomer.

It localises to the cytoplasm. The protein localises to the nucleus. The catalysed reaction is guanosine(9) in tRNA + S-adenosyl-L-methionine = N(1)-methylguanosine(9) in tRNA + S-adenosyl-L-homocysteine + H(+). In terms of biological role, S-adenosyl-L-methionine-dependent guanine N(1)-methyltransferase that catalyzes the formation of N(1)-methylguanine at position 9 (m1G9) in cytoplasmic tRNA. This chain is tRNA (guanine(9)-N1)-methyltransferase, found in Aspergillus fumigatus (strain ATCC MYA-4609 / CBS 101355 / FGSC A1100 / Af293) (Neosartorya fumigata).